Here is a 965-residue protein sequence, read N- to C-terminus: Probable serine/threonine-protein kinase DDB_G0291516 (965 aa).

The disordered stretch occupies residues 114-170 (KDSQKELLPSPQQLTPPTSLPSLPLLPLPQAPEQNEEQQLTQPPSPPSIPPPPPQKK). Composition is skewed to low complexity over residues 119-136 (ELLPSPQQLTPPTSLPSL) and 144-155 (APEQNEEQQLTQ). Residues 156-168 (PPSPPSIPPPPPQ) show a composition bias toward pro residues. 2 ANK repeats span residues 271 to 301 (KGETPLHSLIINNSESCLKKLVIAKINHMGI) and 310 to 339 (LNKNLLAHAIEKGDIDVIRLVLIGGCPLKM). A Protein kinase domain is found at 459–739 (IDFHTQIGSA…NVKAIKKEFL (281 aa)). ATP is bound by residues 465-473 (IGSAGNASV) and Lys-486. Catalysis depends on Asp-587, which acts as the Proton acceptor. The helical transmembrane segment at 653–673 (IYSLGIILWELVCVAMTGTYI) threads the bilayer. N-linked (GlcNAc...) asparagine glycosylation is found at Asn-760, Asn-765, Asn-905, Asn-909, Asn-910, Asn-914, Asn-934, and Asn-938. Residues 881–940 (NINKNKNNNNNNNNNNNNNNNINNNNTFNNSTNNNSNDNINIPYDFNNNNNNNNNSCNNS) are compositionally biased toward low complexity. The disordered stretch occupies residues 881 to 942 (NINKNKNNNN…NNNSCNNSKK (62 aa)).

Belongs to the protein kinase superfamily. Ser/Thr protein kinase family.

The protein localises to the membrane. It carries out the reaction L-seryl-[protein] + ATP = O-phospho-L-seryl-[protein] + ADP + H(+). The enzyme catalyses L-threonyl-[protein] + ATP = O-phospho-L-threonyl-[protein] + ADP + H(+). The polypeptide is Probable serine/threonine-protein kinase DDB_G0291516 (Dictyostelium discoideum (Social amoeba)).